The chain runs to 537 residues: Probable feruloyl esterase ARB_07085 (537 aa).

Residues 1–22 (MVTLPLLLSILPLAAVFSSAAS) form the signal peptide. 3 N-linked (GlcNAc...) asparagine glycosylation sites follow: N67, N76, and N189. 3 disulfide bridges follow: C196–C459, C263–C280, and C508–C529. S197 acts as the Acyl-ester intermediate in catalysis. Ca(2+) contacts are provided by D264, D267, V269, D271, and V273. A glycan (N-linked (GlcNAc...) asparagine) is linked at N339. Catalysis depends on charge relay system residues D419 and H458.

The protein belongs to the tannase family.

It localises to the secreted. The enzyme catalyses feruloyl-polysaccharide + H2O = ferulate + polysaccharide.. Hydrolyzes the feruloyl-arabinose ester bond in arabinoxylans as well as the feruloyl-galactose and feruloyl-arabinose ester bonds. This Arthroderma benhamiae (strain ATCC MYA-4681 / CBS 112371) (Trichophyton mentagrophytes) protein is Probable feruloyl esterase ARB_07085.